A 249-amino-acid chain; its full sequence is MTTPDGIVSALAVALARQSESHADCPLFNDPYAQVFIDAALSRGCQLPSDETSERINGIANYASSRTKWFDEYFIAAGAHGLEQMVIVAAGLDARAWRLPWVAGTTLFEIDHPGVLKFKNEALHEHGESPSVSRYVPVPADLSDGWSERLRDAGFDVSEPTAWAVEGLLPYVADGPHLLFDRIHEISPAGSRLAVEAVGTGVADWLSTQGWQVTMIGAQELMTRYGRCGDHSDTDAGMDTVFVNATRTR.

Residues D111 and 141–142 (DL) each bind S-adenosyl-L-methionine.

The protein belongs to the UPF0677 family.

In terms of biological role, exhibits S-adenosyl-L-methionine-dependent methyltransferase activity. The polypeptide is Putative S-adenosyl-L-methionine-dependent methyltransferase Mkms_0592 (Mycobacterium sp. (strain KMS)).